A 153-amino-acid chain; its full sequence is Large ribosomal subunit protein bL9 (153 aa).

It belongs to the bacterial ribosomal protein bL9 family.

Its function is as follows. Binds to the 23S rRNA. The polypeptide is Large ribosomal subunit protein bL9 (Micrococcus luteus (strain ATCC 4698 / DSM 20030 / JCM 1464 / CCM 169 / CCUG 5858 / IAM 1056 / NBRC 3333 / NCIMB 9278 / NCTC 2665 / VKM Ac-2230) (Micrococcus lysodeikticus)).